We begin with the raw amino-acid sequence, 101 residues long: ATP-dependent Clp protease adapter protein ClpS (101 aa).

It belongs to the ClpS family. Binds to the N-terminal domain of the chaperone ClpA.

In terms of biological role, involved in the modulation of the specificity of the ClpAP-mediated ATP-dependent protein degradation. This chain is ATP-dependent Clp protease adapter protein ClpS, found in Corynebacterium efficiens (strain DSM 44549 / YS-314 / AJ 12310 / JCM 11189 / NBRC 100395).